Reading from the N-terminus, the 316-residue chain is MRVVFAGTPEVAIPVLDAVAASSHELVAVVTRPDAPAGRGRRLLASPVALRAEELGVPVLKPAHPKDPEFQEQLRALRPDCCPVVAYGALLPQAALDIPVHGWVNLHFSALPAWRGAAPVQHAIWAGDEVTGATTFRIVKELDAGPTYGVMTERIRPTDTAGDLLARLAEGGAGLMVATLDGIEDGSLEARPQQAEGVSYAPKVEVEDARVDWSRPAVVIDHQVRACTPAPGAWTTVAGERLKLGPVTHADAHGSQGLGPGELGVGKHDVLVGTGTTAVRLGDVRPHGRKQMAAADWARGARLQTGVRIGVAFGES.

109 to 112 (SALP) is a (6S)-5,6,7,8-tetrahydrofolate binding site.

The protein belongs to the Fmt family.

It catalyses the reaction L-methionyl-tRNA(fMet) + (6R)-10-formyltetrahydrofolate = N-formyl-L-methionyl-tRNA(fMet) + (6S)-5,6,7,8-tetrahydrofolate + H(+). Functionally, attaches a formyl group to the free amino group of methionyl-tRNA(fMet). The formyl group appears to play a dual role in the initiator identity of N-formylmethionyl-tRNA by promoting its recognition by IF2 and preventing the misappropriation of this tRNA by the elongation apparatus. The protein is Methionyl-tRNA formyltransferase of Nocardioides sp. (strain ATCC BAA-499 / JS614).